The following is a 525-amino-acid chain: GMP synthase [glutamine-hydrolyzing] (525 aa).

A Glutamine amidotransferase type-1 domain is found at 16–205; it reads PVLVVDFGAQ…LHDFAGLGAQ (190 aa). The Nucleophile role is filled by Cys-93. Residues His-179 and Glu-181 contribute to the active site. The GMPS ATP-PPase domain maps to 206–399; that stretch reads WTPANIANAL…LGLPEEIVAR (194 aa). 233-239 contacts ATP; the sequence is SGGVDSA.

As to quaternary structure, homodimer.

It catalyses the reaction XMP + L-glutamine + ATP + H2O = GMP + L-glutamate + AMP + diphosphate + 2 H(+). The protein operates within purine metabolism; GMP biosynthesis; GMP from XMP (L-Gln route): step 1/1. In terms of biological role, catalyzes the synthesis of GMP from XMP. This Mycobacterium tuberculosis (strain CDC 1551 / Oshkosh) protein is GMP synthase [glutamine-hydrolyzing] (guaA).